Consider the following 210-residue polypeptide: Imidazole glycerol phosphate synthase subunit HisH (210 aa).

The Glutamine amidotransferase type-1 domain maps to 3-208 (PIAIIDYGMG…GELVRHAGNA (206 aa)). The active-site Nucleophile is the C81. Residues H183 and E185 contribute to the active site.

As to quaternary structure, heterodimer of HisH and HisF.

Its subcellular location is the cytoplasm. The enzyme catalyses 5-[(5-phospho-1-deoxy-D-ribulos-1-ylimino)methylamino]-1-(5-phospho-beta-D-ribosyl)imidazole-4-carboxamide + L-glutamine = D-erythro-1-(imidazol-4-yl)glycerol 3-phosphate + 5-amino-1-(5-phospho-beta-D-ribosyl)imidazole-4-carboxamide + L-glutamate + H(+). The catalysed reaction is L-glutamine + H2O = L-glutamate + NH4(+). It participates in amino-acid biosynthesis; L-histidine biosynthesis; L-histidine from 5-phospho-alpha-D-ribose 1-diphosphate: step 5/9. Functionally, IGPS catalyzes the conversion of PRFAR and glutamine to IGP, AICAR and glutamate. The HisH subunit catalyzes the hydrolysis of glutamine to glutamate and ammonia as part of the synthesis of IGP and AICAR. The resulting ammonia molecule is channeled to the active site of HisF. The sequence is that of Imidazole glycerol phosphate synthase subunit HisH from Moorella thermoacetica (strain ATCC 39073 / JCM 9320).